The chain runs to 279 residues: Large ribosomal subunit protein uL2 (279 aa).

A disordered region spans residues 216 to 279 (KRPSVRGVVM…IQKRKRNRNR (64 aa)). Basic residues predominate over residues 270–279 (IQKRKRNRNR).

It belongs to the universal ribosomal protein uL2 family. As to quaternary structure, part of the 50S ribosomal subunit. Forms a bridge to the 30S subunit in the 70S ribosome.

Functionally, one of the primary rRNA binding proteins. Required for association of the 30S and 50S subunits to form the 70S ribosome, for tRNA binding and peptide bond formation. It has been suggested to have peptidyltransferase activity; this is somewhat controversial. Makes several contacts with the 16S rRNA in the 70S ribosome. The protein is Large ribosomal subunit protein uL2 of Leptospira interrogans serogroup Icterohaemorrhagiae serovar copenhageni (strain Fiocruz L1-130).